The chain runs to 261 residues: MKIQVMLIIIFVGIFTICLAENATKSNESDKSDKSDKSDKPDLSDAIGKVGALLGDPVVTTAIEVLKSLKTESSTTISDRYDQTGFLSINNNYDYSKGAILISRMDELISHWLDDNTYDFITDKQKKTISKALKEYTLQLAEDPYYKQKYELSFSDGKGSLFMMILSVSPHPTNINAIRWEKYILQTDFVPAPSYVIVTESDCDILSCDRTDKIVYLPTVLNQAHMDQIISMNLGMLTGFTNSLNNFNSLNNPDNSNMLGK.

A signal peptide spans 1–20 (MKIQVMLIIIFVGIFTICLA). 2 N-linked (GlcNAc...) asparagine; by host glycosylation sites follow: N22 and N27.

The protein localises to the secreted. This is an uncharacterized protein from Acanthamoeba polyphaga (Amoeba).